Here is a 560-residue protein sequence, read N- to C-terminus: Nitrite reductase (560 aa).

A signal peptide spans methionine 1 to alanine 26. The N-terminal tail stretch occupies residues alanine 27–proline 29. Positions glutamate 30 to isoleucine 126 constitute a Cytochrome c domain. Residues cysteine 47, cysteine 50, and histidine 51 each contribute to the heme c site. A disordered region spans residues lysine 61–glycine 80. The span at leucine 63–glutamate 78 shows a compositional bias: basic and acidic residues. Heme c-binding residues include threonine 97 and methionine 101. The segment at proline 127 to tyrosine 560 is D1-heme domain. Heme d1 is bound by residues histidine 193, arginine 236, serine 237, tyrosine 256, arginine 382, and glutamine 500.

In terms of assembly, homodimer in solution. The cofactor is heme c. Heme is required as a cofactor.

It localises to the periplasm. It catalyses the reaction nitric oxide + Fe(III)-[cytochrome c] + H2O = Fe(II)-[cytochrome c] + nitrite + 2 H(+). It carries out the reaction A + NH4(+) + H2O = hydroxylamine + AH2 + H(+). This chain is Nitrite reductase (nirS), found in Stutzerimonas stutzeri (Pseudomonas stutzeri).